Here is a 397-residue protein sequence, read N- to C-terminus: Formate-dependent phosphoribosylglycinamide formyltransferase (397 aa).

N(1)-(5-phospho-beta-D-ribosyl)glycinamide is bound by residues 22-23 and glutamate 82; that span reads EL. ATP-binding positions include arginine 114, lysine 155, 160-165, 195-198, and glutamate 203; these read SSGKGQ and EGFV. The ATP-grasp domain occupies 119 to 312; sequence CLAAEELSLP…EFALHARAIL (194 aa). Positions 271 and 283 each coordinate Mg(2+). N(1)-(5-phospho-beta-D-ribosyl)glycinamide contacts are provided by residues aspartate 290, lysine 360, and 367–368; that span reads RR.

It belongs to the PurK/PurT family. In terms of assembly, homodimer.

The enzyme catalyses N(1)-(5-phospho-beta-D-ribosyl)glycinamide + formate + ATP = N(2)-formyl-N(1)-(5-phospho-beta-D-ribosyl)glycinamide + ADP + phosphate + H(+). Its pathway is purine metabolism; IMP biosynthesis via de novo pathway; N(2)-formyl-N(1)-(5-phospho-D-ribosyl)glycinamide from N(1)-(5-phospho-D-ribosyl)glycinamide (formate route): step 1/1. Involved in the de novo purine biosynthesis. Catalyzes the transfer of formate to 5-phospho-ribosyl-glycinamide (GAR), producing 5-phospho-ribosyl-N-formylglycinamide (FGAR). Formate is provided by PurU via hydrolysis of 10-formyl-tetrahydrofolate. The polypeptide is Formate-dependent phosphoribosylglycinamide formyltransferase (Alcanivorax borkumensis (strain ATCC 700651 / DSM 11573 / NCIMB 13689 / SK2)).